The primary structure comprises 234 residues: Phosphoglycolate phosphatase (234 aa).

D9 serves as the catalytic Nucleophile. The Mg(2+) site is built by D9 and D11. K162 serves as a coordination point for substrate. Mg(2+)-binding residues include D185 and D189.

The protein belongs to the archaeal SPP-like hydrolase family. The cofactor is Mg(2+).

The enzyme catalyses 2-phosphoglycolate + H2O = glycolate + phosphate. Its function is as follows. Catalyzes the dephosphorylation of 2-phosphoglycolate. The polypeptide is Phosphoglycolate phosphatase (Methanobrevibacter smithii (strain ATCC 35061 / DSM 861 / OCM 144 / PS)).